The following is a 5801-amino-acid chain: MLTHDLTKNLGRPSFLPKELTISDSQVQRLKTPCFEEIIRSFLNKRKPKQNWQLSLEIEEKLSNPTILDIFKTIRTTEETIISDESSRDFFIYSLLKIDCCIKGNLFSYYSEMDRTNIKDIIIGKGLKNNNNNIILGNSIFFKKIVEDFLTMAFERFSWYCENKSTDLLFFICVMSESNERLKEFFNKFQDYHHHHNQSKTAEHYKISKSLNSLPFSISNGVISNGVNPTIKIQWFLKFVELNLKNPIVYQLFDYTIINYPFISNLNILVGPILLNIFNNDNIKIYEDNNNNNNNNNNNNNNNNNNNSTIVDKFNLTLELKSKLAFSVYKRKLAICAVTLPILVLHLQKDPIGFLKYYDEFIKSSPESKSLFNHSISLHLSNDTKKMFNLLPYRNRIDLGWESFIVNKLTTADKINILSTYDETYQDVKAIIICSLNVESYALLSLESKLSDQFLINVFNQQCRLPNNYNFSGVITSFSTIEREYVSRLKNSIEQEAIKKKQLIVKQIEMNSEIYENYFRIVNVMVEALLNQNPSLNSIIECVGTDLGGSLEQDNQYMDTLPNLVLFSHLLRRIATSNLNSSYLLKKDSKGNNRLNLDLSNLAMFYNSKNSFWQEIRGPYDSFLREFIKNLLAKYVEIKSDFKYLDYHYFESLTIILLEMKRRYNCIPSDYRVSNKPVKIVEFKDFIKKFEEKESQYNDLLLVKEYLERKFSFNFSSQFDKNWKTSKRLKLLRQLIKSTKSLYGHYIQDDESIKFLLHFAIVNKTLFFHAIFDYYYLNSSDQTNSKQLNLDQCLKSTREFLKRLIESDSSIQLNDIFKKITEITDINYVREIEPIYNYFKGNGEPYKKELEEQIQKFIDNATFFFGVRKYLPHIEKFIESLDFIVITDFNKKKAKCEEIIKSVFEKNTTIAGANDALILLKSIMKDINFIQLPFFSLNIKDIIEWFSSFTDFKNFNIQVEIASNNYNDSYSAQILDYTLFCRNQFTELVQYSIDSTKDEKPKQMEFSKFFELINQIIPVSGYLSAVNKISSAINNLSNVKVLFKSGNFNEQGTLQNAEMATNSKSKFTSETYNTNNNSTNGSNWWVVSENGFELAQDKLENSYRGIDIFSKFDDDDNNNSNNNNNNNNNNNNNKKIIDNKKTFDTFRIIFKLFKKIHSLHNELYKICHPKFMALQSIQVACDLETLKKEKRHLRNSIKVWKDFISSLPKNLLFLRAPGVSSLYSKLKLTFENKFNNNNNNNNNNIQQQQQQFDLFLNDLVLDLFPSIKYCFYEYPQIINMKLLKNQIESTTNQLLNEKTNSKILIDDEIVSGCFIEKFLKELIRNIKQNLLYIEDDEEEVEEEVGGVEIGQLKNQPIGVPPPNVNKFDLINSFELVNIECNDDLFNSLMELNDSQLPHPSQIFYANSFDADFPFFKCLVEKFSESIFFLIGTPNKKDEFINWMSVHFSNNTMSKLAKVYVISIGDDTHTKDVFSFLSPYSGKNNNIGNTNNSWESFKVLWNKTKVQNGIESLNLVSGGTGTGKSHFIKSEIKAKNGGGGGRNLEIEKPNEHTVLVRPGFIIDPLIKKIKALKDATNFFIHFNISCYADFQEFSQFFYPLISFGYIFGKQDGELCSIPTGCLLTIYVELGDPLGSDYRKNENNTIQSIEYLKYVKTSIPLIFHLSDTEMSKKYLLAEWVSGEAEWRAFAFSSDHCSFYQKATVEMGKDVKLSQYLDYINQMFKRNFPTIDINYLFDKTKYPFRKNFFLMLNERLKFLETYYEFYLVICDHDFQNSNTVLQDSLLTYQELYEVFLVECAQLANPEFSQQKTIWEKPPLITNRSVVKVTKDRSSSSSSSYSGGGSSINNDNISSKQVDFIDLSNNNGLTKSGSKISNYNNQIDRLIESKIKKLPTYITLDKANENIRLFNTKIASSFGIQSRTNIVTDLANQYGFVLTPELSLRLFILNNRIQHHRSMVLTGDTGVGKTMLLIFYSLLINAGLNAIPDIIFEIKEVIIKFARTLEGFSFSQEIVNLNVDFSIDKILLASKEIFNFVPKHLKENNGENNPVQQLQQQNDGDKQQNPQQPQQQQQQQQQQQQQQQQQQQQQQQPKQQQQQQLKHKNSETSSPLFKHQTSFIKEVEEIIVKIVEAYQLIDISRSPSIQDIMKKKRTSPIATYLNNNKTVKLDSLLEQLKEICTIPFKRLFTRIIMNKKISGKDFKAIVNTIIKESNELKKIDQDLKMVVFIDEYNTSCEESLSLINEIFVDGTFDGEYCLPDNIFWIGAMNPLVETVGNAINYTGESLSSSSSGNNLFSSSSSITSSSTDITTSNNYEFVVQETPPPLKQLELDYGSLSVSNESSFCASLIRLNESGIIPAYLNVDLDYPNQVGIDINQMIIIGQKCLRKEKQARTHVSFRDIIRAIDLYQFFVQEIGVEILKTINENENEKISPIQTHWLALICSVSMTYIHRLNPDNRSKMVNAFNEYIGKFSGNNLNSFKKSSSSSNNNNGDYVTEIFKSIICGVSKQTTIPNGVARTESLQLNIFFTLVSIYTCIPICIVGPPGCSKTLSFSIVNDNLNSHGPTSNRPKLYSFLKSTQPFRYQCNNHTSDTEIKEVLDKAIRRGDIITDRVRMVVHLDEAGLVNENTSPMKIMHDYLDKGTRSKTLITIIILSNKILDAAKTNRMLLLVHPKEVSIQDQHSLVKGCLFGRIDKLTDYEENICTALCNAFSEINTHDSSSLQDIDNSNINNINKNNGNTISDISDIHPKLNKRIFAQRDFVFFLRHLRRAFEIKGKLTPEDLLVSLERNFIGTKIFKPHLQSFFKHLGFESDQLLAHDNTIVRIKQSLQDKLDINTDINSQGFRYMMLLDPTDSETSLLILKEIGVEHTVIRVGDFENDQTTESLSHTVSEIKIKMSQGGTVVLVNSQSIQACFYDVFNRYFTIYQQDDEKSFLAHLSFGINSMFCPVHPDFRVIVHLPLSRLNVTQYPWLNRFEKYILSMDQLLSYSLSKASLENIQNYHDHQSNTKAFFKNLLVSAQDFVDEIHIGKLNGSLLFGYTKSTIQSLVYQAFKDNSNFSPYSISKEDLKKMSLLPPDQQINPSTLLNLKLLQIARPESLYKCTKSLPKSYVEQYLSNQEHFNVYLFLKNLVESFSKNQNQQQQQQQQQELEVDSEQQQQQQQQQQQQQQQQQQQQQQQQQQQQQQQQQQQQQQQQSKWMVFTRTSFSLHSIRDSDKNDKFLLLLESNIKVNRNGGSKNLFKVLQLHTFKSKVKCSKEIIDFCTSEEQMVIIIIADMLVVTNNQINFVHEVFDQHANRANKLLVFISHFPPEFSISSQNNINSIFLNNTEYIYIDSLGIKIDNSLISDSGIKSDLEKSNNNNNNNNNDNSGNNSGNEIDGSSNGDNNNNNNNNNNSGEMKFDIRGWISKVYGITDNKPLDETTFLESMFFKYLYQISSSMANSQLMGYIEPKELRVEESQFYSNATKRVEYIKTIFENNNSWVKCIIDQFLKTWNGTNLITNIIADVSSDIVSTKSTQSFFESIISSIKSFFYPVISQIIKHLINHYSFLSIYEVKPNSMEQKMVEKFIISANSLKISDSVEERFEPIRILPPIIRKVRSELLLYDSISTVINQLFDQALSTCKFMSNYGFLYKEFYQLVSKHPIKPLLDYIVSEEPLLERFNNDFIIRTLKFEKTVSKFFFNLIDSFKGRFVTSSSSPSSSSKKDNINSHPILELWVTSHFEHRTLFYLKNILLPIINLKGVDLISELLKIPLNNNINRTIEDYKRLIVDFSFNLLYNRLLVLLDQVKCNDSYNEDIFLNWISVVREVLNISKTISNVLKDLRKISNGSNNDDSYLKAIQVFISYSILMDSCINSINFIKNEDGTISTTPKNTTKSSSPSVSTLHSMVKIYYNFFNKEFKSDSFNVLFNNLIEFKKEKESKLIGDSYSSILQKTCLLDILDPIATLSRENFSQFLRVLQDPKRNNKIEIPIGWICSVIGEYINLEDNYQFLREKVNEICCKSCEEYYFPPLVSKPTGLSFKFLGITEKSYIHSFKLLEDSIYYAELNRIKSEELNSLCSSHLREKFLREPFSNIILESINTQIIEKFADLLNSNIENAKEVLEKTKILKGTLQSILVAPENPNGKILKLINFYHMTLINHLKESTMATLLRDEAFLSTFGLRLHLLDSDKISGVDASQRGVNLSNKTEVDFSQLRFIYDSSNNSYGVLFKKIEQLINSSDKPEFEKLTETLNTPDCQGLFRASLFIILYQYYLDGLDCSAFKYLFESKEQDSTRKFFDLQNFTEYYLPFIYPDQKLNKNIGVHKLLMRQENKEREDITAAQITINSIAISIGSNSNTFLYNLTRHIQTVAGQYFPACDVGNIFRDCAMIYLDGQDDHTVTMGYDVLYKYIVSCCSWSAFTFTVSVQPRYTEYLLKPQIHFVSKLDKKDHVSLTNYLWNRALTSINEIIRNPELSSSLIEPSQYISEFLYQIWLDGHTLNNSQQTQHFRSHFANTTQVTNYEKYLCNVLTKIKKENESRKSHLMRIFAQRTIVSSKNKEIQMNINSIRSDFVRSYERPYFTFEKINQFCSSSNGSSKNFEVLTFMSNQIQKICLSKHFTPLVNFIVLFHQFLKFRLQENQFNFNFNQCVQILLDKQYETEESIKPLRLAWTHFTNAWKSVIKEMNIIEGGCAQKPEYEKVAFPIHDETPMSVILFDSDSNGSGVILNLINGWVSHTQSPCLNLRNDVPMSPLFKTIAEGFIPKGVTYDISDLPEGENYLLLGSDFEPNDYHQFIYRLFSQYQTFDKETMSPDFLSIQNRVINRFFAGKGVAGILENYSKRFPFQKVISEQDSVVKKKLASLLLDDEIQSLSNLVRNLYSLIQKLPEIYFKDIGHSYLKIHFENTLSARQNYLDDFSQELSTLVSNIINLTNEQQSIDVNQSIFHFRNSITTFVPLDLAKQLSINMVGTISIMLINSSLKQKKLYRNFCPEPKIIDGKYIEFFDRFKSNIIEKAKNEADNLNFLRNLCEYIREVHSKLVSNDVLKEISVSTSESITLAQIIQKRIPEFSFDKEVISKKSFCLNGTPTSYYRILIKTITDIYNHINPMIQNKKNTVYSEIFTNHFNSINSEEEIKQINIDSIRTSNNSSPNLIQKINEQLDNNNNNNNNNNNNNNNNNNNIDHGDDNNDGESESDIEDYENINSTCGKIKIIKNTTRKIDQIDNHPFKHYLYYWIRYLSQFCELLNVEPLNNYNNNNNDFKIFSLFKLFKLQSFEQNYDQNSPIIINRLDKKLSKGLITSISPMETMIHILNRLSKLDSNIKQLFNWKFKIICDECKENTESSGFIKLTLDLTNINETNRSIKSLLMSTLLYSIKIRNCNHNKSDIKLVESPEYIFIEVERFKKGLPFNSSIINFEKNISISELLGNFSKDINGLYNIQSILSYGSRNDEFDFITSNEGQYYHLTSSSCVKTLNEYSFNAIIESLNNNCNFIILKKGGYIKTSHISDPVDPSLLNKPPIPSSDNEEEEEDDDDDEVNEDEYENGNEDEDEDEDEDEDEDEDEDEDEDEDEDEDEDEDEDEDEDEDEDEEYEDEDEDEDIIGDDAEVEKENKNGFSHLESLQITPIPHDKDEEQPEKPQQQEIHQQPEKPQQPEKPQELQSTETPGQEVSVDYKILYDRKAFKEFLYGGFEKFTEDLKLQILDAGINCFSVLLNLKSEDWSKFSFLQLPKRNQLVNSYKKIHNEAIKKEYPFESPFDIDDQKAYEQFLKDIVNDEKTIMDLVEAGFDSFTSLIPSDDGGWEEVSLNLQEILKPATCFNLINQLKLVGKA.

Disordered stretches follow at residues 1114 to 1136, 1827 to 1846, 2040 to 2109, 3351 to 3392, 5134 to 5168, 5478 to 5573, and 5600 to 5638; these read DDDN…NKKI, KDRS…SINN, NNGE…SPLF, EKSN…NNSG, DNNN…SESD, ISDP…EDII, and HDKD…ETPG. Composition is skewed to low complexity over residues 1118–1134, 1831–1846, 2048–2096, 3353–3392, and 5135–5153; these read NNSN…NNNK, SSSS…SINN, QQLQ…QQQQ, SNNN…NNSG, and NNNN…NNNN. Residues 5496 to 5573 are compositionally biased toward acidic residues; the sequence is DNEEEEEDDD…EDEDEDEDII (78 aa). Basic and acidic residues predominate over residues 5617 to 5629; it reads QQPEKPQQPEKPQ.

This is an uncharacterized protein from Dictyostelium discoideum (Social amoeba).